Reading from the N-terminus, the 335-residue chain is MANSNNQLLKEIRYDWNREEILQILNMPLIDLMWEAQIVHRKFNKYDIQLASLFSVKTGGCEENCSYCSQSIYSASEIKSHPQFQVEEVLARAKVAKNEGADRFCMGWAWREIRDGKSFNAMLEMVSGVRDLGMEACVTAGMLTEEQASRLADAGLTAYNHNLDTSPEHYKNIITTRTYQDRLDTIKRVRNAGINVCCGGIIGLGETNGDRASLLEVLSNMNPHPESVPINSLVAIEGTGLEDTQEIDSIEMIRMIATARILMPESKIRLSAGREKLTKEAQILCFQCGANSIFYGDELLTTSNPSFQSDRKLLKEVGVSFNKDFETCEKTLSSL.

A Radical SAM core domain is found at 46 to 274 (YDIQLASLFS…ESKIRLSAGR (229 aa)). [4Fe-4S] cluster-binding residues include C61, C65, and C68. [2Fe-2S] cluster contacts are provided by C105, C137, C197, and R269.

Belongs to the radical SAM superfamily. Biotin synthase family. In terms of assembly, homodimer. The cofactor is [4Fe-4S] cluster. [2Fe-2S] cluster is required as a cofactor.

The catalysed reaction is (4R,5S)-dethiobiotin + (sulfur carrier)-SH + 2 reduced [2Fe-2S]-[ferredoxin] + 2 S-adenosyl-L-methionine = (sulfur carrier)-H + biotin + 2 5'-deoxyadenosine + 2 L-methionine + 2 oxidized [2Fe-2S]-[ferredoxin]. The protein operates within cofactor biosynthesis; biotin biosynthesis; biotin from 7,8-diaminononanoate: step 2/2. In terms of biological role, catalyzes the conversion of dethiobiotin (DTB) to biotin by the insertion of a sulfur atom into dethiobiotin via a radical-based mechanism. The protein is Biotin synthase of Prochlorococcus marinus (strain MIT 9301).